We begin with the raw amino-acid sequence, 1059 residues long: Carbamoyl phosphate synthase large chain (1059 aa).

A carboxyphosphate synthetic domain region spans residues 1–401 (MPKRKDIQKI…SLLKACRSLE (401 aa)). The ATP site is built by arginine 129, arginine 169, glycine 175, glycine 176, arginine 208, isoleucine 210, glutamate 215, glycine 241, isoleucine 242, histidine 243, glutamine 284, and glutamate 298. The ATP-grasp 1 domain maps to 133-327 (KQLMEELGQP…IAKLAAKIAV (195 aa)). Mg(2+)-binding residues include glutamine 284, glutamate 298, and asparagine 300. Mn(2+)-binding residues include glutamine 284, glutamate 298, and asparagine 300. Residues 402-546 (VGVDHNELPA…YSTYGFENES (145 aa)) are oligomerization domain. The tract at residues 547 to 929 (VKSSKESVLV…ALYKAFEASY (383 aa)) is carbamoyl phosphate synthetic domain. Residues 671 to 861 (EQALKELDIP…MAQVATRLIL (191 aa)) form the ATP-grasp 2 domain. The ATP site is built by arginine 707, serine 746, isoleucine 748, glutamate 752, glycine 777, valine 778, histidine 779, serine 780, glutamine 820, and glutamate 832. Mg(2+) contacts are provided by glutamine 820, glutamate 832, and asparagine 834. Residues glutamine 820, glutamate 832, and asparagine 834 each contribute to the Mn(2+) site. The MGS-like domain occupies 930-1059 (LHLPNFGNVV…ESRSFTTEAI (130 aa)). Positions 930-1059 (LHLPNFGNVV…ESRSFTTEAI (130 aa)) are allosteric domain.

Belongs to the CarB family. Composed of two chains; the small (or glutamine) chain promotes the hydrolysis of glutamine to ammonia, which is used by the large (or ammonia) chain to synthesize carbamoyl phosphate. Tetramer of heterodimers (alpha,beta)4. Mg(2+) is required as a cofactor. Requires Mn(2+) as cofactor.

The catalysed reaction is hydrogencarbonate + L-glutamine + 2 ATP + H2O = carbamoyl phosphate + L-glutamate + 2 ADP + phosphate + 2 H(+). It carries out the reaction hydrogencarbonate + NH4(+) + 2 ATP = carbamoyl phosphate + 2 ADP + phosphate + 2 H(+). The protein operates within amino-acid biosynthesis; L-arginine biosynthesis; carbamoyl phosphate from bicarbonate: step 1/1. It functions in the pathway pyrimidine metabolism; UMP biosynthesis via de novo pathway; (S)-dihydroorotate from bicarbonate: step 1/3. Large subunit of the glutamine-dependent carbamoyl phosphate synthetase (CPSase). CPSase catalyzes the formation of carbamoyl phosphate from the ammonia moiety of glutamine, carbonate, and phosphate donated by ATP, constituting the first step of 2 biosynthetic pathways, one leading to arginine and/or urea and the other to pyrimidine nucleotides. The large subunit (synthetase) binds the substrates ammonia (free or transferred from glutamine from the small subunit), hydrogencarbonate and ATP and carries out an ATP-coupled ligase reaction, activating hydrogencarbonate by forming carboxy phosphate which reacts with ammonia to form carbamoyl phosphate. This chain is Carbamoyl phosphate synthase large chain, found in Streptococcus gordonii (strain Challis / ATCC 35105 / BCRC 15272 / CH1 / DL1 / V288).